A 648-amino-acid polypeptide reads, in one-letter code: MGIQILPPQLANQIAAGEVVERPASVVKELVENSLDAGATRIDIEIDKGGSKLIKIRDNGSGIPKDELALALSRHATSKLHSLDDLEAILSFGFRGEALASISSVSRLTLTSRTAEQTEAWQAYAEGADMAVKVMPAAHPVGSTIEVVDLFFNTPARRRFLKSDKTEFTHIDEWLKRIALVRGDIHFTLTHNGKIVRNCRPAMNEPQYLQRLTQVAGRQFADEALRVECQHDDLRLSGYLQSPWSTVLTDTHYFYVNGRLVRDRLVNHAVRQAFAQKAEVEQPGYVLMLDIDPHQVDVNVHPAKHEVRFHQSRYVHDYILQALQSALEEAGELGFERPFEPSSPQIRDEASLSETGAQTQTEHHAFELQSPESKTHSTWNEASRVDTSRAETSRESRIDSPLGERTRDIASARPYAGVQSNAYGSMAVPRESRSGSAGESRARAELPSKVAIASYGELLQTPSYSVQDKPYQPVLAMPAILNGQYWVLAQGQNLSLLPIQSVALATRSHEVETKLATGLIGQPLLMPVSIAADTDWPALLEEHETLIRQLGLELTIRYQQLIIKKVPPYLRDSQLAKVIPEWLQSLRFEAPAPNALAVWLAEQSLTGFTSAADIWAAYCQLTEEKRQQIADKAVSLPWQSWLEEQASE.

Positions glutamate 336–arginine 443 are disordered. Polar residues predominate over residues serine 370–glutamate 381. A compositionally biased stretch (basic and acidic residues) spans serine 383–alanine 410.

This sequence belongs to the DNA mismatch repair MutL/HexB family.

Its function is as follows. This protein is involved in the repair of mismatches in DNA. It is required for dam-dependent methyl-directed DNA mismatch repair. May act as a 'molecular matchmaker', a protein that promotes the formation of a stable complex between two or more DNA-binding proteins in an ATP-dependent manner without itself being part of a final effector complex. This Shewanella sp. (strain ANA-3) protein is DNA mismatch repair protein MutL.